The sequence spans 247 residues: tRNA uridine(34) hydroxylase (247 aa).

One can recognise a Rhodanese domain in the interval 124–218 (TQQDVIVIDT…YLEDTQNKNN (95 aa)). C178 functions as the Cysteine persulfide intermediate in the catalytic mechanism.

It belongs to the TrhO family.

It carries out the reaction uridine(34) in tRNA + AH2 + O2 = 5-hydroxyuridine(34) in tRNA + A + H2O. Catalyzes oxygen-dependent 5-hydroxyuridine (ho5U) modification at position 34 in tRNAs. The polypeptide is tRNA uridine(34) hydroxylase (Rickettsia conorii (strain ATCC VR-613 / Malish 7)).